Reading from the N-terminus, the 85-residue chain is uncharacterized protein (85 aa).

This is an uncharacterized protein from Escherichia coli (strain K12).